The following is a 211-amino-acid chain: Uracil phosphoribosyltransferase (211 aa).

30 to 34 contacts GTP; the sequence is KGLVR. 5-phospho-alpha-D-ribose 1-diphosphate is bound by residues Arg79, Arg104, and 133-141; that span reads DPMLATGIT. Uracil contacts are provided by residues Ile197 and 202–204; that span reads GDA. Asp203 lines the 5-phospho-alpha-D-ribose 1-diphosphate pocket.

It belongs to the UPRTase family. The cofactor is Mg(2+).

The enzyme catalyses UMP + diphosphate = 5-phospho-alpha-D-ribose 1-diphosphate + uracil. It functions in the pathway pyrimidine metabolism; UMP biosynthesis via salvage pathway; UMP from uracil: step 1/1. With respect to regulation, allosterically activated by GTP. Catalyzes the conversion of uracil and 5-phospho-alpha-D-ribose 1-diphosphate (PRPP) to UMP and diphosphate. This is Uracil phosphoribosyltransferase from Pyrobaculum islandicum (strain DSM 4184 / JCM 9189 / GEO3).